The chain runs to 348 residues: Benzoate 1,2-dioxygenase electron transfer component (348 aa).

The 2Fe-2S ferredoxin-type domain occupies 14–109 (HQVALQFEDG…DAVFQIQASS (96 aa)). Residues Cys51, Cys56, Cys59, and Cys93 each contribute to the [2Fe-2S] cluster site. Residues 111–348 (VCKTKIHHFE…NFLFEKFSAN (238 aa)) form a ferredoxin-reductase region. Positions 116–217 (IHHFEGTLAR…TGPFGSFYLR (102 aa)) constitute an FAD-binding FR-type domain.

The protein belongs to the bacterial ring-hydroxylating dioxygenase ferredoxin reductase family. In terms of assembly, this dioxygenase system consists of three proteins: the two subunits of the hydroxylase component (BenA and BenB), and an electron transfer component (BenC). Requires FAD as cofactor. [2Fe-2S] cluster is required as a cofactor.

The enzyme catalyses 2 reduced [2Fe-2S]-[ferredoxin] + NAD(+) + H(+) = 2 oxidized [2Fe-2S]-[ferredoxin] + NADH. It participates in xenobiotic degradation; toluene degradation. Its function is as follows. Electron transfer component of benzoate 1,2-dioxygenase system. This is Benzoate 1,2-dioxygenase electron transfer component (benC) from Acinetobacter baylyi (strain ATCC 33305 / BD413 / ADP1).